The chain runs to 469 residues: Sulfate adenylyltransferase subunit 1 (469 aa).

A tr-type G domain is found at 22–224 (KDLMRFITCG…NMTWYPGSPL (203 aa)). The tract at residues 31-38 (GSVDDGKS) is G1. 31–38 (GSVDDGKS) is a binding site for GTP. The G2 stretch occupies residues 89 to 93 (GITID). The interval 110 to 113 (DTPG) is G3. Residues 110–114 (DTPGH) and 165–168 (NKMD) each bind GTP. The tract at residues 165–168 (NKMD) is G4. The G5 stretch occupies residues 202–204 (SAL).

This sequence belongs to the TRAFAC class translation factor GTPase superfamily. Classic translation factor GTPase family. CysN/NodQ subfamily. As to quaternary structure, heterodimer composed of CysD, the smaller subunit, and CysN.

It carries out the reaction sulfate + ATP + H(+) = adenosine 5'-phosphosulfate + diphosphate. It participates in sulfur metabolism; hydrogen sulfide biosynthesis; sulfite from sulfate: step 1/3. Its function is as follows. With CysD forms the ATP sulfurylase (ATPS) that catalyzes the adenylation of sulfate producing adenosine 5'-phosphosulfate (APS) and diphosphate, the first enzymatic step in sulfur assimilation pathway. APS synthesis involves the formation of a high-energy phosphoric-sulfuric acid anhydride bond driven by GTP hydrolysis by CysN coupled to ATP hydrolysis by CysD. The sequence is that of Sulfate adenylyltransferase subunit 1 from Psychromonas ingrahamii (strain DSM 17664 / CCUG 51855 / 37).